The primary structure comprises 745 residues: Centromere protein I (745 aa).

A compositionally biased stretch (polar residues) spans 1–27 (MATPRLTRNSQQQNRISQGSNSRQTTL). The interval 1–58 (MATPRLTRNSQQQNRISQGSNSRQTTLLDWKVKDKAGNSKSVLEESSSLEDSNHADDQ) is disordered. Over residues 39–50 (SKSVLEESSSLE) the composition is skewed to low complexity.

The protein belongs to the CENP-I/CTF3 family. Component of the CENPA-CAD complex, composed of CENPI, CENPK, CENPL, CENPO, CENPP, CENPQ, CENPR and CENPS. The CENPA-CAD complex interacts with the CENPA-NAC complex, at least composed of CENPA, CENPC, CENPH, CENPM, CENPN, CENPT and CENPU. Interacts with SENP6. Post-translationally, sumoylated. Sumoylated form can be polyubiquitinated by RNF4, leading to its degradation. Desumoylation by SENP6 prevents its degradation. In terms of tissue distribution, highly expressed in testis, ovary and spleen. A much lower mRNA level is found in brain and lung, and no expression is detected in liver, kidney, heart, muscle, pituitary gland, prostate, epididymis and seminal vesicle.

The protein localises to the nucleus. It localises to the chromosome. It is found in the centromere. In terms of biological role, component of the CENPA-CAD (nucleosome distal) complex, a complex recruited to centromeres which is involved in assembly of kinetochore proteins, mitotic progression and chromosome segregation. May be involved in incorporation of newly synthesized CENPA into centromeres via its interaction with the CENPA-NAC complex. Required for the localization of CENPF, MAD1L1 and MAD2 (MAD2L1 or MAD2L2) to kinetochores. Involved in the response of gonadal tissues to follicle-stimulating hormone. This Rattus norvegicus (Rat) protein is Centromere protein I (Cenpi).